Here is a 743-residue protein sequence, read N- to C-terminus: Ectonucleotide pyrophosphatase/phosphodiesterase C27A7.3 (743 aa).

The Cytoplasmic segment spans residues 1–23; sequence MSNRVVDVNSKKTGTSWKKKLMK. The chain crosses the membrane as a helical; Signal-anchor for type II membrane protein span at residues 24–44; it reads IVIWSLAMLSFIAGLVLLGLV. Residues 45–743 lie on the Lumenal side of the membrane; the sequence is AAATISGSKN…LRRNITTSLW (699 aa). Residues D87 and T123 each contribute to the Zn(2+) site. The active-site Nucleophile is T123. N195 is a glycosylation site (N-linked (GlcNAc...) asparagine). Zn(2+) is bound by residues D243, H247, D286, and H287. N-linked (GlcNAc...) asparagine glycosylation is found at N293 and N320. H383 provides a ligand contact to Zn(2+). 3 N-linked (GlcNAc...) asparagine glycosylation sites follow: N406, N434, and N536. Ca(2+) contacts are provided by D635, N637, D639, I641, and D643. N737 carries an N-linked (GlcNAc...) asparagine glycan.

It belongs to the nucleotide pyrophosphatase/phosphodiesterase family. Zn(2+) is required as a cofactor. Ca(2+) serves as cofactor.

It localises to the membrane. Probable phosphodiesterase. This chain is Ectonucleotide pyrophosphatase/phosphodiesterase C27A7.3, found in Caenorhabditis elegans.